A 470-amino-acid polypeptide reads, in one-letter code: 6-phospho-beta-galactosidase (470 aa).

Residues Gln-19, His-116, Asn-159, Glu-160, and Asn-297 each coordinate D-galactose 6-phosphate. Glu-160 functions as the Proton donor in the catalytic mechanism. Glu-375 functions as the Nucleophile in the catalytic mechanism. 4 residues coordinate D-galactose 6-phosphate: Ser-430, Trp-431, Lys-437, and Tyr-439.

This sequence belongs to the glycosyl hydrolase 1 family.

It catalyses the reaction a 6-phospho-beta-D-galactoside + H2O = D-galactose 6-phosphate + an alcohol. It functions in the pathway carbohydrate metabolism; lactose degradation; D-galactose 6-phosphate and beta-D-glucose from lactose 6-phosphate: step 1/1. The protein is 6-phospho-beta-galactosidase of Staphylococcus aureus (strain USA300).